Here is a 981-residue protein sequence, read N- to C-terminus: Ubiquitin carboxyl-terminal hydrolase 37 (981 aa).

Positions 32-34 (KEN) match the KEN box 1 motif. 2 short sequence motifs (D-box) span residues 71–79 (RLMLTLQDN) and 96–105 (RLFLDAVHQN). The tract at residues 111–308 (MKPSQGSGSF…SAKRSLGFLP (198 aa)) is disordered. Ser114 is subject to Phosphoserine. Polar residues predominate over residues 135-148 (RQLSYSDNQASSKR). Positions 149–159 (GSLETKDDIPF) are enriched in basic and acidic residues. The D-box 3 signature appears at 160–168 (RKVLGNPGR). The residue at position 170 (Ser170) is a Phosphoserine. The segment covering 172–195 (KTATGSGITVTRTIPSLTSASTPL) has biased composition (polar residues). A Phosphoserine modification is found at Ser212. Residues 223-225 (KEN) carry the KEN box 2 motif. Basic and acidic residues predominate over residues 245 to 259 (SREKQLSLKQSEENR). Over residues 266-300 (LQSSSFYGSRTGSKDYSSGSTNLDRTNVSGQTPSA) the composition is skewed to polar residues. Residues 343–953 (QGFSNLGNTC…SGYIFFYMHK (611 aa)) form the USP domain. The active-site Nucleophile is Cys352. The residue at position 630 (Ser630) is a Phosphoserine; by CDK2. Residues Ser652 and Ser654 each carry the phosphoserine modification. Disordered regions lie at residues 673-704 (GCEQQQDDLEKDSKPCRIEPDKSELENSGFDG) and 719-831 (KREA…EQKE). 2 stretches are compositionally biased toward basic and acidic residues: residues 683–697 (KDSKPCRIEPDKSEL) and 719–734 (KREASPTLSHEDDDKP). The 20-residue stretch at 706 to 725 (SEEELLAAVLEMSKREASPT) folds into the UIM 1 domain. At Ser772 the chain carries Phosphoserine. Residues 776 to 788 (ITKDCDENKENKT) are compositionally biased toward basic and acidic residues. Residues 784–786 (KEN) carry the KEN box 3 motif. 2 UIM domains span residues 808–827 (REEQELQQALAQSLQEQEAW) and 830–849 (KEDDDLKRATELSLQEFNNS). Residues 813–824 (LQQALAQSLQEQ) show a composition bias toward low complexity. The active-site Proton acceptor is the His908.

The protein belongs to the peptidase C19 family. As to quaternary structure, interacts with FZR1/CDH1. Interacts with CDT1. In terms of processing, polyubiquitinated via 'Lys-11'-linked ubiquitin by the APC(CDH1) complex during late mitosis, leading to its degradation. Able to mediate auto-deubiquitination. Phosphorylated at Ser-630 by CDK2 during G1/S phase but not during mitosis; phosphorylation at Ser-630 is required for deubiquitinase activity. Also polyubiquitinated during early G1 phase, without leading to degradation. Phosphorylated at Ser-114 by ATM following DNA damage, which in turn increases its deubiquitination activity towards BLM.

The protein resides in the nucleus. It is found in the chromosome. The enzyme catalyses Thiol-dependent hydrolysis of ester, thioester, amide, peptide and isopeptide bonds formed by the C-terminal Gly of ubiquitin (a 76-residue protein attached to proteins as an intracellular targeting signal).. Functionally, deubiquitinase that plays a role in different processes including cell cycle regulation, DNA replication or DNA damage response. Antagonizes the anaphase-promoting complex (APC/C) during G1/S transition by mediating deubiquitination of cyclin-A (CCNA1 and CCNA2), thereby promoting S phase entry. Specifically mediates deubiquitination of 'Lys-11'-linked polyubiquitin chains, a specific ubiquitin-linkage type mediated by the APC/C complex. Phosphorylation at Ser-628 during G1/S phase maximizes the deubiquitinase activity, leading to prevent degradation of cyclin-A (CCNA1 and CCNA2). Plays an important role in the regulation of DNA replication by stabilizing the licensing factor CDT1. Also plays an essential role beyond S-phase entry to promote the efficiency and fidelity of replication by deubiquitinating checkpoint kinase 1/CHK1, promoting its stability. Sustains the DNA damage response (DDR) by deubiquitinating and stabilizing the ATP-dependent DNA helicase BLM. Mechanistically, DNA double-strand breaks (DSB) promotes ATM-mediated phosphorylation of USP37 and enhances the binding between USP37 and BLM. Promotes cell migration by deubiquitinating and stabilizing the epithelial-mesenchymal transition (EMT)-inducing transcription factor SNAI. Plays a role in the regulation of mitotic spindle assembly and mitotic progression by associating with chromatin-associated WAPL and stabilizing it through deubiquitination. In Canis lupus familiaris (Dog), this protein is Ubiquitin carboxyl-terminal hydrolase 37 (USP37).